A 340-amino-acid polypeptide reads, in one-letter code: Sulfotransferase ppzF (340 aa).

It participates in secondary metabolite biosynthesis. Sulfotransferase; part of the gene cluster that mediates the biosynthesis of pyrrolopyrazines, secondary metabolites showing insecticidal activity. The role of ppzF within the pathway has still to be determined. The single multifunctional NRPS ppzA is sufficient to produce peramine via condensation of 1-pyrroline-5-carboxylate and arginine, N-methylation of the alpha-amino group of arginine and reduction of the thioester and the cyclization to form an iminium ion resulting in release from the peptide synthetase. Deprotonation of this intermediate and oxidation of the pyrroline ring would give rise to peramine. In Epichloe species that produce only peramine, the peramine synthetase gene is not localized in a gene cluster, in contrast to Metarhizium species that contain additional pyrrolopyrazine biosynthesis genes. The 2-oxoglutarate-Fe(II) type oxidoreductase ppzC hydroxylates peramine to yield the newly identified compound 8-hydroxyperamine whereas ppzD converts L-proline into trans-4-hydroxy-L-proline, a precursor of peramine biosynthesis. The chain is Sulfotransferase ppzF from Metarhizium rileyi (strain RCEF 4871) (Nomuraea rileyi).